Here is a 400-residue protein sequence, read N- to C-terminus: Renin (400 aa).

Residues 1-17 (MPLWGLLLALWGCSTFS) form the signal peptide. A propeptide spans 18–59 (LPADTAAFRRIFLKKMPSVRESLKERGVDMAQLGAEWSQLTK) (activation peptide). An N-linked (GlcNAc...) asparagine glycan is attached at asparagine 65. Positions 80 to 397 (YYGEIGIGTP…DRRNNRIGFA (318 aa)) constitute a Peptidase A1 domain. The active site involves aspartate 98. Cysteine 111 and cysteine 118 are disulfide-bonded. N-linked (GlcNAc...) asparagine glycosylation is present at asparagine 135. Residues cysteine 277 and cysteine 281 are joined by a disulfide bond. Residue aspartate 286 is part of the active site. Residues cysteine 320 and cysteine 356 are joined by a disulfide bond. N-linked (GlcNAc...) asparagine glycosylation is present at asparagine 353.

The protein belongs to the peptidase A1 family. As to quaternary structure, interacts with ATP6AP2. As to expression, kidney.

It is found in the secreted. It localises to the membrane. The catalysed reaction is Cleavage of Leu-|-Xaa bond in angiotensinogen to generate angiotensin I.. Its activity is regulated as follows. Interaction with ATP6AP2 results in a 5-fold increased efficiency in angiotensinogen processing. Its function is as follows. Renin is a highly specific endopeptidase, whose only known function is to generate angiotensin I from angiotensinogen in the plasma, initiating a cascade of reactions that produce an elevation of blood pressure and increased sodium retention by the kidney. This chain is Renin (REN), found in Ovis aries (Sheep).